The following is a 218-amino-acid chain: Replication protein RepB (218 aa).

The tract at residues 1-26 (MKSESKIDWTVPRPNKNPKTKQPYKR) is disordered. The segment covering 16–26 (KNPKTKQPYKR) has biased composition (basic residues).

Belongs to the Gram-positive plasmids replication protein type 2 family.

Its function is as follows. Is essential for plasmid replication. Nicks the positive strand at the plus origin of replication. This Lactiplantibacillus plantarum (Lactobacillus plantarum) protein is Replication protein RepB (repB).